Consider the following 226-residue polypeptide: Thiopurine S-methyltransferase (226 aa).

Residues W16, M51, E72, and R131 each coordinate S-adenosyl-L-methionine.

It belongs to the class I-like SAM-binding methyltransferase superfamily. TPMT family.

It is found in the cytoplasm. The catalysed reaction is S-adenosyl-L-methionine + a thiopurine = S-adenosyl-L-homocysteine + a thiopurine S-methylether.. The chain is Thiopurine S-methyltransferase from Francisella tularensis subsp. novicida (strain U112).